Reading from the N-terminus, the 730-residue chain is Elongation factor 2 (730 aa).

Residues 19–260 (DRIRNIGIVA…MVVKHLPNPL (242 aa)) enclose the tr-type G domain. Residues 28 to 35 (AHIDHGKT), 94 to 98 (DTPGH), and 148 to 151 (NKVD) contribute to the GTP site. At histidine 597 the chain carries Diphthamide.

It belongs to the TRAFAC class translation factor GTPase superfamily. Classic translation factor GTPase family. EF-G/EF-2 subfamily.

It is found in the cytoplasm. Its function is as follows. Catalyzes the GTP-dependent ribosomal translocation step during translation elongation. During this step, the ribosome changes from the pre-translocational (PRE) to the post-translocational (POST) state as the newly formed A-site-bound peptidyl-tRNA and P-site-bound deacylated tRNA move to the P and E sites, respectively. Catalyzes the coordinated movement of the two tRNA molecules, the mRNA and conformational changes in the ribosome. This is Elongation factor 2 from Methanoculleus marisnigri (strain ATCC 35101 / DSM 1498 / JR1).